Here is a 140-residue protein sequence, read N- to C-terminus: MTEYQASERRGCRIMGISRSLLHYCPNTARDIPVVEVLQKLAHQYPAYGFGLMFNKLRQSGLPWNVKRVYRVYRLLKLNFRRKGKKRLPNRHPQPLAIPLKMNHCWSVDFMSDALTDGRRFRLFNVVEILTGKHWQLKLT.

This chain is Low calcium response locus protein T (lcrT), found in Yersinia pestis.